Consider the following 1417-residue polypeptide: DExH-box ATP-dependent RNA helicase DExH4, chloroplastic (1417 aa).

A compositionally biased stretch (basic residues) spans 1 to 12 (MAPTKKPQKNKQ). Positions 1–37 (MAPTKKPQKNKQSKNEIASSLIPNSGHKKPSKAPKLL) are disordered. The N-terminal 61 residues, 1–61 (MAPTKKPQKN…NFRRTPSPVT (61 aa)), are a transit peptide targeting the chloroplast. In terms of domain architecture, Helicase ATP-binding spans 607–781 (LQKLKEKDVL…FGQCPIITAQ (175 aa)). 620–627 (GETGSGKT) is a binding site for ATP. The DEIH box signature appears at 722 to 725 (DEVH). The 176-residue stretch at 868-1043 (LLEELICHID…ELCLHIKLLG (176 aa)) folds into the Helicase C-terminal domain.

It belongs to the DExH box helicase family.

Its subcellular location is the plastid. The protein localises to the chloroplast. The enzyme catalyses ATP + H2O = ADP + phosphate + H(+). This is DExH-box ATP-dependent RNA helicase DExH4, chloroplastic from Arabidopsis thaliana (Mouse-ear cress).